A 190-amino-acid polypeptide reads, in one-letter code: Small ribosomal subunit protein eS7 (190 aa).

Belongs to the eukaryotic ribosomal protein eS7 family. As to quaternary structure, component of the small ribosomal subunit. Part of the small subunit (SSU) processome, composed of more than 70 proteins and the RNA chaperone small nucleolar RNA (snoRNA) U3.

The protein resides in the cytoplasm. Its subcellular location is the cytoskeleton. The protein localises to the microtubule organizing center. It is found in the centrosome. It localises to the nucleus. The protein resides in the nucleolus. In terms of biological role, component of the small ribosomal subunit. The ribosome is a large ribonucleoprotein complex responsible for the synthesis of proteins in the cell. Required for rRNA maturation. Part of the small subunit (SSU) processome, first precursor of the small eukaryotic ribosomal subunit. During the assembly of the SSU processome in the nucleolus, many ribosome biogenesis factors, an RNA chaperone and ribosomal proteins associate with the nascent pre-rRNA and work in concert to generate RNA folding, modifications, rearrangements and cleavage as well as targeted degradation of pre-ribosomal RNA by the RNA exosome. In Spodoptera frugiperda (Fall armyworm), this protein is Small ribosomal subunit protein eS7 (RpS7).